The sequence spans 314 residues: Putative S-adenosyl-L-methionine-dependent methyltransferase MAB_3886c (314 aa).

Residues Asp-133 and 162–163 (DL) contribute to the S-adenosyl-L-methionine site.

The protein belongs to the UPF0677 family.

Exhibits S-adenosyl-L-methionine-dependent methyltransferase activity. This is Putative S-adenosyl-L-methionine-dependent methyltransferase MAB_3886c from Mycobacteroides abscessus (strain ATCC 19977 / DSM 44196 / CCUG 20993 / CIP 104536 / JCM 13569 / NCTC 13031 / TMC 1543 / L948) (Mycobacterium abscessus).